We begin with the raw amino-acid sequence, 578 residues long: Poly(A) RNA polymerase cid13 (578 aa).

Mg(2+) is bound by residues Asp110 and Asp112. Residues 275–330 form the PAP-associated domain; that stretch reads SLGILFVEFFRFFGYLFDYEHFVLSIRHGTFLSKRAKGWQFQLNNFLCVEEPFHTS. The interval 495–565 is disordered; that stretch reads SHHFDERHGG…SEVVSPVSLH (71 aa). The segment covering 496–510 has biased composition (basic and acidic residues); sequence HHFDERHGGDRHEKN. The span at 516 to 527 shows a compositional bias: basic residues; it reads RYSRNKFHKKKQ. A compositionally biased stretch (low complexity) spans 547-565; the sequence is NSPPSNSSSSEVVSPVSLH.

Belongs to the DNA polymerase type-B-like family. Interacts with pab1. It depends on Mg(2+) as a cofactor. The cofactor is Mn(2+).

It localises to the cytoplasm. The protein resides in the nucleus. It carries out the reaction RNA(n) + ATP = RNA(n)-3'-adenine ribonucleotide + diphosphate. In terms of biological role, polymerase that creates the 3' poly(A) tail of suc22 mRNA. This Schizosaccharomyces pombe (strain 972 / ATCC 24843) (Fission yeast) protein is Poly(A) RNA polymerase cid13 (cid13).